Consider the following 241-residue polypeptide: Histidine-rich protein PFHRP-III (241 aa).

An N-terminal signal peptide occupies residues 1–21 (MVSFSKNKVLSAAVFASVLLL). Positions 52–76 (AHAGDAHHAHHVADAHHAHHVADAH) are enriched in basic and acidic residues. Disordered stretches follow at residues 52–145 (AHAG…ANAH) and 195–241 (AHHD…HLHH). The segment covering 84–145 (AHHAANAHHA…ANAHHAANAH (62 aa)) has biased composition (low complexity). Basic and acidic residues predominate over residues 195-231 (AHHDGAHHDDAHHDGAHHDDAHHDGAHHDGAHHDGAH).

This Plasmodium falciparum protein is Histidine-rich protein PFHRP-III.